The following is an 88-amino-acid chain: Acylphosphatase (88 aa).

Residues 3-88 (AARFIFTGVV…IPTTEAFVTG (86 aa)) enclose the Acylphosphatase-like domain. Catalysis depends on residues Arg18 and Asn36.

The protein belongs to the acylphosphatase family.

The enzyme catalyses an acyl phosphate + H2O = a carboxylate + phosphate + H(+). The sequence is that of Acylphosphatase (acyP) from Xanthomonas campestris pv. campestris (strain 8004).